The chain runs to 247 residues: Carboxy-S-adenosyl-L-methionine synthase (247 aa).

S-adenosyl-L-methionine is bound by residues Y40, 65–67 (GAS), 90–91 (DN), 122–123 (DI), N137, and R204.

This sequence belongs to the class I-like SAM-binding methyltransferase superfamily. Cx-SAM synthase family. In terms of assembly, homodimer.

The catalysed reaction is prephenate + S-adenosyl-L-methionine = carboxy-S-adenosyl-L-methionine + 3-phenylpyruvate + H2O. In terms of biological role, catalyzes the conversion of S-adenosyl-L-methionine (SAM) to carboxy-S-adenosyl-L-methionine (Cx-SAM). This chain is Carboxy-S-adenosyl-L-methionine synthase, found in Pseudomonas putida (strain W619).